Consider the following 377-residue polypeptide: Killer cell immunoglobulin-like receptor 2DL4 (377 aa).

Residues 1–21 (MSMSPTVIILACLGFFLDQSV) form the signal peptide. The Extracellular portion of the chain corresponds to 22-242 (WAHVGGQDKP…FKTGIARHLH (221 aa)). Ig-like C2-type domains are found at residues 44-104 (GGHV…HPHS) and 139-202 (GENV…FHGS). Residues cysteine 51 and cysteine 97 are joined by a disulfide bond. Asparagine 141 and asparagine 175 each carry an N-linked (GlcNAc...) asparagine glycan. A disulfide bond links cysteine 146 and cysteine 195. The helical transmembrane segment at 243–263 (AVIRYSVAIILFTILPFFLLH) threads the bilayer. At 264 to 377 (RWCSKKKDAA…ASSNVPAAGI (114 aa)) the chain is on the cytoplasmic side. Residues 338 to 377 (PRALSPAHEHHSQALMGSSRETTALSQTQLASSNVPAAGI) form a disordered region. The segment covering 352–377 (LMGSSRETTALSQTQLASSNVPAAGI) has biased composition (polar residues).

The protein belongs to the immunoglobulin superfamily. In terms of assembly, interacts with peptide-bound HLA-G-B2M heterotrimeric complex. Interacts with ARRB2. As to expression, expressed in decidual NK cells and innate lymphoid cell type I (ILC1). Expressed in a subset of peripheral NK cells.

The protein resides in the cell membrane. It localises to the early endosome membrane. Receptor for non-classical major histocompatibility class Ib HLA-G molecules. Recognizes HLA-G in complex with B2M/beta-2 microglobulin and a nonamer self-peptide (peptide-bound HLA-G-B2M). In decidual NK cells, binds peptide-bound HLA-G-B2M complex and triggers NK cell senescence-associated secretory phenotype as a molecular switch to promote vascular remodeling and fetal growth in early pregnancy. May play a role in balancing tolerance and antiviral-immunity at maternal-fetal interface by keeping in check the effector functions of NK, CD8+ T cells and B cells. Upon interaction with peptide-bound HLA-G-B2M, initiates signaling from the endosomal compartment leading to downstream activation of PRKDC-XRCC5 and AKT1, and ultimately triggering NF-kappa-B-dependent pro-inflammatory response. The protein is Killer cell immunoglobulin-like receptor 2DL4 of Homo sapiens (Human).